A 248-amino-acid polypeptide reads, in one-letter code: Phosphoribosyl isomerase A (248 aa).

Asp14 (proton acceptor) is an active-site residue. Asp133 serves as the catalytic Proton donor.

It belongs to the HisA/HisF family.

The protein localises to the cytoplasm. The enzyme catalyses 1-(5-phospho-beta-D-ribosyl)-5-[(5-phospho-beta-D-ribosylamino)methylideneamino]imidazole-4-carboxamide = 5-[(5-phospho-1-deoxy-D-ribulos-1-ylimino)methylamino]-1-(5-phospho-beta-D-ribosyl)imidazole-4-carboxamide. It catalyses the reaction N-(5-phospho-beta-D-ribosyl)anthranilate = 1-(2-carboxyphenylamino)-1-deoxy-D-ribulose 5-phosphate. Its pathway is amino-acid biosynthesis; L-histidine biosynthesis; L-histidine from 5-phospho-alpha-D-ribose 1-diphosphate: step 4/9. It functions in the pathway amino-acid biosynthesis; L-tryptophan biosynthesis; L-tryptophan from chorismate: step 3/5. Involved in both the histidine and tryptophan biosynthetic pathways. The protein is Phosphoribosyl isomerase A of Mycobacterium sp. (strain JLS).